The primary structure comprises 507 residues: Arabinose import ATP-binding protein AraG (507 aa).

ABC transporter domains are found at residues 14-249 and 249-505; these read LRFN…MVGR and RDIQ…LPRT. Residue 46–53 coordinates ATP; the sequence is GENGAGKS.

The protein belongs to the ABC transporter superfamily. Arabinose importer (TC 3.A.1.2.2) family. The complex is composed of two ATP-binding proteins (AraG), two transmembrane proteins (AraH) and a solute-binding protein (AraF).

Its subcellular location is the cell inner membrane. The enzyme catalyses L-arabinose(out) + ATP + H2O = L-arabinose(in) + ADP + phosphate + H(+). Functionally, part of the ABC transporter complex AraFGH involved in arabinose import. Responsible for energy coupling to the transport system. The protein is Arabinose import ATP-binding protein AraG of Pseudomonas savastanoi pv. phaseolicola (strain 1448A / Race 6) (Pseudomonas syringae pv. phaseolicola (strain 1448A / Race 6)).